An 856-amino-acid polypeptide reads, in one-letter code: Valine--tRNA ligase (856 aa).

A 'HIGH' region motif is present at residues 47-57 (PTASGVLHIGH). Positions 578–582 (KMSKS) match the 'KMSKS' region motif. Position 581 (Lys-581) interacts with ATP.

It belongs to the class-I aminoacyl-tRNA synthetase family. ValS type 2 subfamily. Monomer.

It is found in the cytoplasm. It carries out the reaction tRNA(Val) + L-valine + ATP = L-valyl-tRNA(Val) + AMP + diphosphate. Functionally, catalyzes the attachment of valine to tRNA(Val). As ValRS can inadvertently accommodate and process structurally similar amino acids such as threonine, to avoid such errors, it has a 'posttransfer' editing activity that hydrolyzes mischarged Thr-tRNA(Val) in a tRNA-dependent manner. The polypeptide is Valine--tRNA ligase (Tropheryma whipplei (strain TW08/27) (Whipple's bacillus)).